The primary structure comprises 713 residues: Phosphoribosylformylglycinamidine synthase subunit PurL (713 aa).

The active site involves His-32. Tyr-35 is a binding site for ATP. Residue Glu-76 participates in Mg(2+) binding. Substrate contacts are provided by residues 77-80 (SHNH) and Arg-99. Residue His-78 is the Proton acceptor of the active site. Asp-100 lines the Mg(2+) pocket. Gln-224 contacts substrate. Mg(2+) is bound at residue Asp-252. 296 to 298 (ESQ) provides a ligand contact to substrate. ATP contacts are provided by Asp-471 and Gly-508. Asn-509 contacts Mg(2+). Ser-511 contacts substrate.

The protein belongs to the FGAMS family. Monomer. Part of the FGAM synthase complex composed of 1 PurL, 1 PurQ and 2 PurS subunits.

It localises to the cytoplasm. It carries out the reaction N(2)-formyl-N(1)-(5-phospho-beta-D-ribosyl)glycinamide + L-glutamine + ATP + H2O = 2-formamido-N(1)-(5-O-phospho-beta-D-ribosyl)acetamidine + L-glutamate + ADP + phosphate + H(+). It participates in purine metabolism; IMP biosynthesis via de novo pathway; 5-amino-1-(5-phospho-D-ribosyl)imidazole from N(2)-formyl-N(1)-(5-phospho-D-ribosyl)glycinamide: step 1/2. Its function is as follows. Part of the phosphoribosylformylglycinamidine synthase complex involved in the purines biosynthetic pathway. Catalyzes the ATP-dependent conversion of formylglycinamide ribonucleotide (FGAR) and glutamine to yield formylglycinamidine ribonucleotide (FGAM) and glutamate. The FGAM synthase complex is composed of three subunits. PurQ produces an ammonia molecule by converting glutamine to glutamate. PurL transfers the ammonia molecule to FGAR to form FGAM in an ATP-dependent manner. PurS interacts with PurQ and PurL and is thought to assist in the transfer of the ammonia molecule from PurQ to PurL. This is Phosphoribosylformylglycinamidine synthase subunit PurL from Thermococcus kodakarensis (strain ATCC BAA-918 / JCM 12380 / KOD1) (Pyrococcus kodakaraensis (strain KOD1)).